The primary structure comprises 319 residues: L-lactate dehydrogenase (319 aa).

Residues Val11, Asp32, Arg37, Tyr62, and 76 to 77 each bind NAD(+); that span reads GV. Residues Gln79, Arg85, and 117-120 contribute to the substrate site; that span reads NPVD. NAD(+) is bound by residues 115–117 and Ser140; that span reads VTN. 145–148 is a substrate binding site; it reads DTAR. Positions 150 and 165 each coordinate beta-D-fructose 1,6-bisphosphate. His172 functions as the Proton acceptor in the catalytic mechanism. Tyr217 is modified (phosphotyrosine). Thr226 contributes to the substrate binding site.

This sequence belongs to the LDH/MDH superfamily. LDH family. In terms of assembly, homotetramer.

It localises to the cytoplasm. The enzyme catalyses (S)-lactate + NAD(+) = pyruvate + NADH + H(+). It participates in fermentation; pyruvate fermentation to lactate; (S)-lactate from pyruvate: step 1/1. Its activity is regulated as follows. Allosterically activated by fructose 1,6-bisphosphate (FBP). Functionally, catalyzes the conversion of lactate to pyruvate. This Thermotoga sp. (strain RQ2) protein is L-lactate dehydrogenase.